We begin with the raw amino-acid sequence, 153 residues long: UPF0260 protein YcgN (153 aa).

It belongs to the UPF0260 family.

This Escherichia coli O6:K15:H31 (strain 536 / UPEC) protein is UPF0260 protein YcgN.